The primary structure comprises 325 residues: Thiamine-monophosphate kinase (325 aa).

4 residues coordinate Mg(2+): Asp-30, Ser-45, Thr-46, and Asp-47. His-54 lines the substrate pocket. Mg(2+)-binding residues include Asp-75 and Asp-122. ATP-binding positions include 121–122 (GD) and Arg-146. Residue Asp-212 coordinates Mg(2+). Residue Ser-214 participates in ATP binding. A Mg(2+)-binding site is contributed by Asp-215. Positions 263 and 319 each coordinate substrate.

This sequence belongs to the thiamine-monophosphate kinase family.

The catalysed reaction is thiamine phosphate + ATP = thiamine diphosphate + ADP. The protein operates within cofactor biosynthesis; thiamine diphosphate biosynthesis; thiamine diphosphate from thiamine phosphate: step 1/1. In terms of biological role, catalyzes the ATP-dependent phosphorylation of thiamine-monophosphate (TMP) to form thiamine-pyrophosphate (TPP), the active form of vitamin B1. The protein is Thiamine-monophosphate kinase (thiL) of Salmonella typhimurium (strain LT2 / SGSC1412 / ATCC 700720).